Here is a 416-residue protein sequence, read N- to C-terminus: NADH-quinone oxidoreductase subunit D (416 aa).

It belongs to the complex I 49 kDa subunit family. As to quaternary structure, NDH-1 is composed of 14 different subunits. Subunits NuoB, C, D, E, F, and G constitute the peripheral sector of the complex.

The protein localises to the cell inner membrane. The catalysed reaction is a quinone + NADH + 5 H(+)(in) = a quinol + NAD(+) + 4 H(+)(out). Functionally, NDH-1 shuttles electrons from NADH, via FMN and iron-sulfur (Fe-S) centers, to quinones in the respiratory chain. The immediate electron acceptor for the enzyme in this species is believed to be ubiquinone. Couples the redox reaction to proton translocation (for every two electrons transferred, four hydrogen ions are translocated across the cytoplasmic membrane), and thus conserves the redox energy in a proton gradient. This is NADH-quinone oxidoreductase subunit D from Gluconacetobacter diazotrophicus (strain ATCC 49037 / DSM 5601 / CCUG 37298 / CIP 103539 / LMG 7603 / PAl5).